The primary structure comprises 545 residues: Luciferin 4-monooxygenase (545 aa).

A Microbody targeting signal motif is present at residues 543–545 (SKL).

The protein belongs to the ATP-dependent AMP-binding enzyme family. Mg(2+) is required as a cofactor.

It is found in the peroxisome. It catalyses the reaction firefly D-luciferin + ATP + O2 = firefly oxyluciferin + hnu + AMP + CO2 + diphosphate. Functionally, produces green light with a wavelength of 562 nm. The polypeptide is Luciferin 4-monooxygenase (Photuris pensylvanica (Pennsylania firefly)).